Reading from the N-terminus, the 563-residue chain is Beta-catenin-like protein 1 (563 aa).

M1 carries the post-translational modification N-acetylmethionine. The tract at residues 1–81 (MDVGELLSYQ…EEEEPLDESS (81 aa)) is disordered. The Nuclear localization signal signature appears at 16 to 33 (KRPRDDEEEELKTRRKQT). Positions 34-45 (GPRERGRYREDE) are enriched in basic and acidic residues. Acidic residues predominate over residues 66–78 (DGEEEEEEEEPLD). HEAT repeat units lie at residues 79–129 (ESSV…VVAT) and 134–176 (YHLL…TLHE). K91 carries the post-translational modification N6-acetyllysine. Residues 130–140 (MPDLYHLLVEL) carry the Nuclear export signal (NES) motif. 5 ARM repeats span residues 178–228 (EEGA…MAEF), 229–273 (RPEM…LQDN), 274–323 (DENR…CLML), 325–363 (SNRE…AMIG), and 364–417 (PEGA…LLRN). Position 389 is a phosphoserine (S389). Positions 476–540 (DMEDEFYLRR…HIIKEYAENI (65 aa)) form a coiled coil. Residue S545 is modified to Phosphoserine.

Component of the PRP19-CDC5L splicing complex composed of a core complex comprising a homotetramer of PRPF19, CDC5L, PLRG1 and BCAS2, and at least three less stably associated proteins CTNNBL1, CWC15 and HSPA8. Interacts directly with CWC15 and CDC5L in the complex. Interacts with AICDA; the interaction is important for the antibody diversification activity of AICDA. Interacts with PRPF31 (via its NLS). Interacts (via its N-terminal NLS) with KPNA1 and KPNA2.

Its subcellular location is the nucleus. Functionally, component of the PRP19-CDC5L complex that forms an integral part of the spliceosome and is required for activating pre-mRNA splicing. Participates in AID/AICDA-mediated somatic hypermutation (SHM) and class-switch recombination (CSR), 2 processes resulting in the production of high-affinity, mutated isotype-switched antibodies. The chain is Beta-catenin-like protein 1 (Ctnnbl1) from Rattus norvegicus (Rat).